A 952-amino-acid polypeptide reads, in one-letter code: UvrABC system protein A (952 aa).

31–38 serves as a coordination point for ATP; the sequence is GVSGSGKS. The C4-type zinc finger occupies 253–280; the sequence is CPEHGSVLEELEPRIFSFNSPYGACPAC. 2 consecutive ABC transporter domains span residues 309 to 591 and 611 to 938; these read WSRG…PQSL and GNGK…AFLA. 643 to 650 provides a ligand contact to ATP; that stretch reads GPSGSGKS. A C4-type zinc finger spans residues 742–768; sequence CEACGGDGTVKIEMLFLPDLYVPCEVC.

This sequence belongs to the ABC transporter superfamily. UvrA family. In terms of assembly, forms a heterotetramer with UvrB during the search for lesions.

Its subcellular location is the cytoplasm. In terms of biological role, the UvrABC repair system catalyzes the recognition and processing of DNA lesions. UvrA is an ATPase and a DNA-binding protein. A damage recognition complex composed of 2 UvrA and 2 UvrB subunits scans DNA for abnormalities. When the presence of a lesion has been verified by UvrB, the UvrA molecules dissociate. This Thermus thermophilus (strain ATCC 27634 / DSM 579 / HB8) protein is UvrABC system protein A.